The sequence spans 341 residues: L-threonine 3-dehydrogenase (341 aa).

Residue Cys38 participates in Zn(2+) binding. Active-site charge relay system residues include Thr40 and His43. The Zn(2+) site is built by His63, Glu64, Cys93, Cys96, Cys99, and Cys107. NAD(+)-binding positions include Ile175, Asp195, Arg200, Leu262–Ile264, and Ile286–Tyr287.

This sequence belongs to the zinc-containing alcohol dehydrogenase family. As to quaternary structure, homotetramer. It depends on Zn(2+) as a cofactor.

The protein localises to the cytoplasm. It carries out the reaction L-threonine + NAD(+) = (2S)-2-amino-3-oxobutanoate + NADH + H(+). It functions in the pathway amino-acid degradation; L-threonine degradation via oxydo-reductase pathway; glycine from L-threonine: step 1/2. Functionally, catalyzes the NAD(+)-dependent oxidation of L-threonine to 2-amino-3-ketobutyrate. The sequence is that of L-threonine 3-dehydrogenase from Shigella dysenteriae serotype 1 (strain Sd197).